The following is an 870-amino-acid chain: Leucine--tRNA ligase (870 aa).

Positions 36–46 (PYPSGKIHLGH) match the 'HIGH' region motif. The 'KMSKS' region signature appears at 602 to 606 (KMSKS). K605 is a binding site for ATP.

This sequence belongs to the class-I aminoacyl-tRNA synthetase family.

The protein resides in the cytoplasm. The catalysed reaction is tRNA(Leu) + L-leucine + ATP = L-leucyl-tRNA(Leu) + AMP + diphosphate. This Rickettsia akari (strain Hartford) protein is Leucine--tRNA ligase.